A 1469-amino-acid polypeptide reads, in one-letter code: uncharacterized protein (1469 aa).

Residues 146–180 show a composition bias toward basic and acidic residues; it reads GDHITPKEEEEKEKEKEKEKEKEKEKEKEKEKDSE. 9 disordered regions span residues 146-186, 231-255, 306-344, 430-455, 520-560, 654-706, 719-755, 881-958, and 1329-1369; these read GDHI…LQEQ, IQNNQNNQNNNDSPINKEIEDDNNN, TTTTTTTTTSSSNNCTNSISNTDKSTTTNCPPVENGGDS, LNFNNNNNNNNNNNNNNNNNSQPYHY, PVKN…NNNS, TTTT…PLVR, RTQTQLQTKIQPKSPQPQPTAAPEPQKPPTPSIVKNQ, YNNI…NIIN, and NCSS…NSSN. Composition is skewed to low complexity over residues 232–241, 306–327, 430–449, 523–559, and 654–693; these read QNNQNNQNNN, TTTTTTTTTSSSNNCTNSISNT, LNFNNNNNNNNNNNNNNNNN, NNNNNNNNNNNNNNNNNNNNNNNNNNNNNNNNNINNN, and TTTTTTNTNSTNTNSTINATSPPHTPKLSSSPLLTTTTTP. A compositionally biased stretch (polar residues) spans 719–731; sequence RTQTQLQTKIQPK. Positions 732-749 are enriched in pro residues; the sequence is SPQPQPTAAPEPQKPPTP. 2 stretches are compositionally biased toward low complexity: residues 1329–1347 and 1354–1369; these read NCSSSSSSSESNGIDSGSE and RSNTTNNSNNINNSSN.

This is an uncharacterized protein from Dictyostelium discoideum (Social amoeba).